Here is a 149-residue protein sequence, read N- to C-terminus: uncharacterized protein (149 aa).

A helical transmembrane segment spans residues 12–31 (FKNLVIGAVSGVAAAYFLST).

It localises to the membrane. This is an uncharacterized protein from Streptococcus pyogenes serotype M6 (strain ATCC BAA-946 / MGAS10394).